Reading from the N-terminus, the 890-residue chain is Kinesin-like protein KIF20A (890 aa).

At Ser-2 the chain carries N-acetylserine. Phosphoserine is present on residues Ser-7, Ser-14, and Ser-21. The 444-residue stretch at 64–507 (KVKVYLRVRP…AKFSAIASQL (444 aa)) folds into the Kinesin motor domain. ATP is bound at residue 160 to 167 (GVTNSGKT). Phosphoserine; by PLK1 is present on Ser-528. A phosphoserine mark is found at Ser-532, Ser-662, Ser-668, Ser-685, and Ser-825. A coiled-coil region spans residues 611–762 (LDTQKELLEE…ESLQSAERAC (152 aa)). The globular stretch occupies residues 763–890 (CHSTGAGKLR…LKSGPFGKKY (128 aa)). A disordered region spans residues 832-865 (TNQENQQPNQQPPGKKPFLRNLLPRTPTCQSSTD). Thr-857 carries the phosphothreonine modification. Residues Ser-867, Ser-878, and Ser-883 each carry the phosphoserine modification.

This sequence belongs to the TRAFAC class myosin-kinesin ATPase superfamily. Kinesin family. In terms of processing, phosphorylated by PLK1 at Ser-528 during mitosis, creating a docking site for PLK1 and recruiting PLK1 at central spindle.

It localises to the golgi apparatus. Its subcellular location is the cytoplasm. The protein resides in the cytoskeleton. The protein localises to the spindle. Functionally, mitotic kinesin required for chromosome passenger complex (CPC)-mediated cytokinesis. Following phosphorylation by PLK1, involved in recruitment of PLK1 to the central spindle. Interacts with guanosine triphosphate (GTP)-bound forms of RAB6A and RAB6B. May act as a motor required for the retrograde RAB6 regulated transport of Golgi membranes and associated vesicles along microtubules. Has a microtubule plus end-directed motility. This Homo sapiens (Human) protein is Kinesin-like protein KIF20A (KIF20A).